A 295-amino-acid chain; its full sequence is Ethanolamine ammonia-lyase small subunit (295 aa).

Residues Val207, Glu228, and Cys258 each coordinate adenosylcob(III)alamin.

It belongs to the EutC family. In terms of assembly, the basic unit is a heterodimer which dimerizes to form tetramers. The heterotetramers trimerize; 6 large subunits form a core ring with 6 small subunits projecting outwards. The cofactor is adenosylcob(III)alamin.

Its subcellular location is the bacterial microcompartment. It carries out the reaction ethanolamine = acetaldehyde + NH4(+). Its pathway is amine and polyamine degradation; ethanolamine degradation. Functionally, catalyzes the deamination of various vicinal amino-alcohols to oxo compounds. Allows this organism to utilize ethanolamine as the sole source of nitrogen and carbon in the presence of external vitamin B12. This Escherichia coli O139:H28 (strain E24377A / ETEC) protein is Ethanolamine ammonia-lyase small subunit.